The chain runs to 483 residues: Probable zinc metalloprotease PTT_08196 (483 aa).

An N-terminal signal peptide occupies residues 1 to 18 (MLFRSVILSNALLLPACA). N-linked (GlcNAc...) asparagine glycosylation is found at Asn96 and Asn121. Residues His167, Asp187, and Glu220 each coordinate Zn(2+). Asn235 carries an N-linked (GlcNAc...) asparagine glycan. Residue Asp247 coordinates Zn(2+). Residues Asn310, Asn362, Asn401, Asn411, and Asn421 are each glycosylated (N-linked (GlcNAc...) asparagine). In terms of domain architecture, Fibronectin type-III spans 396-483 (PAMPRNVTID…KSPAVYPFPA (88 aa)).

Belongs to the peptidase M28 family. M28B subfamily. It depends on Zn(2+) as a cofactor.

It is found in the secreted. The protein is Probable zinc metalloprotease PTT_08196 of Pyrenophora teres f. teres (strain 0-1) (Barley net blotch fungus).